The primary structure comprises 448 residues: MRKYFGTDGVRGVANTELTCDLAYKLGRAGGFVLAQGDHRVKVVVGKDTRISGDMLEASLIAGLMSVGCDVITVGIIPTPAVAYLTRKYGADCGVVISASHNPVEYNGIKFFNKNGYKLDDEIELKIEEYIDDIDKIDCLPIGENVGRKLHEHCAQRDYVDYLKSIISTDFKGLKVVLDCANGASYKVAPIVFDELGASVISINSSPDGNNINYKCGSTHPEQLQRAVLEHNADLGLAYDGDADRLIAVNEKGQIVDGDHIMILSALNLKKNNKLAQDTLVVTVMSNIGLTIAAKENGINLSTTAVGDRYVLEDMVKNGYNLGGEQSGHMIFLDYNTTGDGVLSSLILANIILQEKKPLSEIASIMSQYPQVLVNATIKNENKNKYMEYPEIKTEIERIESILDGNGRVLIRPSGTEPLVRVMLEGKEEGQIKELATNLANLIQEKLS.

The Phosphoserine intermediate role is filled by Ser-100. 4 residues coordinate Mg(2+): Ser-100, Asp-240, Asp-242, and Asp-244. Residue Ser-100 is modified to Phosphoserine.

It belongs to the phosphohexose mutase family. It depends on Mg(2+) as a cofactor. Activated by phosphorylation.

It carries out the reaction alpha-D-glucosamine 1-phosphate = D-glucosamine 6-phosphate. Functionally, catalyzes the conversion of glucosamine-6-phosphate to glucosamine-1-phosphate. This Clostridioides difficile (strain 630) (Peptoclostridium difficile) protein is Phosphoglucosamine mutase.